Consider the following 239-residue polypeptide: Protein Thf1 (239 aa).

A coiled-coil region spans residues 183 to 221 (ERVRKDLELYRSSLDRMKQARAVVEEMVKAARRQQERRQ). The segment covering 211 to 221 (KAARRQQERRQ) has biased composition (basic and acidic residues). The segment at 211–239 (KAARRQQERRQSAASLPETSLGDPSKPGS) is disordered.

It belongs to the THF1 family.

In terms of biological role, may be involved in photosynthetic membrane biogenesis. In Synechococcus sp. (strain JA-2-3B'a(2-13)) (Cyanobacteria bacterium Yellowstone B-Prime), this protein is Protein Thf1.